The sequence spans 277 residues: Energy-coupling factor transporter ATP-binding protein EcfA1 (277 aa).

Residues 4-238 enclose the ABC transporter domain; sequence IETKNLNYSY…SELLSKNDLK (235 aa). Residue 38–45 coordinates ATP; sequence GKNGSGKS.

It belongs to the ABC transporter superfamily. Energy-coupling factor EcfA family. Forms a stable energy-coupling factor (ECF) transporter complex composed of 2 membrane-embedded substrate-binding proteins (S component), 2 ATP-binding proteins (A component) and 2 transmembrane proteins (T component).

It localises to the cell membrane. Functionally, ATP-binding (A) component of a common energy-coupling factor (ECF) ABC-transporter complex. Unlike classic ABC transporters this ECF transporter provides the energy necessary to transport a number of different substrates. The chain is Energy-coupling factor transporter ATP-binding protein EcfA1 from Oenococcus oeni (strain ATCC BAA-331 / PSU-1).